A 316-amino-acid polypeptide reads, in one-letter code: 4-hydroxy-3-methylbut-2-enyl diphosphate reductase (316 aa).

Cys12 contacts [4Fe-4S] cluster. 2 residues coordinate (2E)-4-hydroxy-3-methylbut-2-enyl diphosphate: His41 and His74. Positions 41 and 74 each coordinate dimethylallyl diphosphate. The isopentenyl diphosphate site is built by His41 and His74. Cys96 is a [4Fe-4S] cluster binding site. Position 124 (His124) interacts with (2E)-4-hydroxy-3-methylbut-2-enyl diphosphate. His124 serves as a coordination point for dimethylallyl diphosphate. Isopentenyl diphosphate is bound at residue His124. The active-site Proton donor is the Glu126. Thr169 contacts (2E)-4-hydroxy-3-methylbut-2-enyl diphosphate. Cys199 provides a ligand contact to [4Fe-4S] cluster. Ser227, Ser228, Asn229, and Ser271 together coordinate (2E)-4-hydroxy-3-methylbut-2-enyl diphosphate. Ser227, Ser228, Asn229, and Ser271 together coordinate dimethylallyl diphosphate. Residues Ser227, Ser228, Asn229, and Ser271 each contribute to the isopentenyl diphosphate site.

It belongs to the IspH family. [4Fe-4S] cluster is required as a cofactor.

The enzyme catalyses isopentenyl diphosphate + 2 oxidized [2Fe-2S]-[ferredoxin] + H2O = (2E)-4-hydroxy-3-methylbut-2-enyl diphosphate + 2 reduced [2Fe-2S]-[ferredoxin] + 2 H(+). It carries out the reaction dimethylallyl diphosphate + 2 oxidized [2Fe-2S]-[ferredoxin] + H2O = (2E)-4-hydroxy-3-methylbut-2-enyl diphosphate + 2 reduced [2Fe-2S]-[ferredoxin] + 2 H(+). It participates in isoprenoid biosynthesis; dimethylallyl diphosphate biosynthesis; dimethylallyl diphosphate from (2E)-4-hydroxy-3-methylbutenyl diphosphate: step 1/1. Its pathway is isoprenoid biosynthesis; isopentenyl diphosphate biosynthesis via DXP pathway; isopentenyl diphosphate from 1-deoxy-D-xylulose 5-phosphate: step 6/6. Catalyzes the conversion of 1-hydroxy-2-methyl-2-(E)-butenyl 4-diphosphate (HMBPP) into a mixture of isopentenyl diphosphate (IPP) and dimethylallyl diphosphate (DMAPP). Acts in the terminal step of the DOXP/MEP pathway for isoprenoid precursor biosynthesis. The chain is 4-hydroxy-3-methylbut-2-enyl diphosphate reductase from Xanthomonas axonopodis pv. citri (strain 306).